Here is a 167-residue protein sequence, read N- to C-terminus: Transmembrane protein B169L (167 aa).

The next 2 membrane-spanning stretches (helical) occupy residues 28–48 (NPFI…FAIC) and 60–80 (TAIY…YVLN). Asn-88 carries N-linked (GlcNAc...) asparagine; by host glycosylation.

It belongs to the asfivirus B169L family.

The protein resides in the host membrane. The protein localises to the virion. The chain is Transmembrane protein B169L from African swine fever virus (isolate Tick/Malawi/Lil 20-1/1983) (ASFV).